A 556-amino-acid chain; its full sequence is (-)-alpha-pinene synthase (556 aa).

Mg(2+)-binding residues include Asp-309, Asp-313, Asp-453, and Glu-461. The DDXXD motif signature appears at 309–313 (DDMYD).

The protein belongs to the terpene synthase family. Tpsa subfamily. Mg(2+) is required as a cofactor. It depends on Mn(2+) as a cofactor. In terms of tissue distribution, expressed in ripe fruits and roots. Not detected in vegetative tissues.

Its subcellular location is the cytoplasm. It localises to the cytosol. It catalyses the reaction (2E)-geranyl diphosphate = (1S,5S)-alpha-pinene + diphosphate. Its pathway is secondary metabolite biosynthesis; terpenoid biosynthesis. Monoterpene synthase catalyzing the production of (-)-alpha-pinene, beta-phellandrene and beta-myrcene as the major products. Unable to use farnesyl diphosphate as substrate. Exclusively expressed in the fruit of wild strawberries. Not detected in cultivated varieties. This chain is (-)-alpha-pinene synthase, found in Fragaria vesca (Woodland strawberry).